The sequence spans 646 residues: Chaperone protein DnaK (646 aa).

Phosphothreonine; by autocatalysis is present on threonine 198. The segment at 603 to 646 (EQAQQAGGAEGFDPNAFQGGDAGQQKADDGVVDAEFTEVKDDKK) is disordered. A compositionally biased stretch (low complexity) spans 618-627 (AFQGGDAGQQ).

Belongs to the heat shock protein 70 family.

Its function is as follows. Acts as a chaperone. This is Chaperone protein DnaK from Acinetobacter baumannii (strain AB307-0294).